The primary structure comprises 320 residues: Aspartate carbamoyltransferase catalytic subunit (320 aa).

Residues Arg68 and Thr69 each contribute to the carbamoyl phosphate site. Lys96 is an L-aspartate binding site. Residues Arg118, His148, and Gln151 each contribute to the carbamoyl phosphate site. Arg181 and Arg236 together coordinate L-aspartate. Carbamoyl phosphate-binding residues include Gly277 and Pro278.

Belongs to the aspartate/ornithine carbamoyltransferase superfamily. ATCase family. As to quaternary structure, heterododecamer (2C3:3R2) of six catalytic PyrB chains organized as two trimers (C3), and six regulatory PyrI chains organized as three dimers (R2).

It carries out the reaction carbamoyl phosphate + L-aspartate = N-carbamoyl-L-aspartate + phosphate + H(+). It functions in the pathway pyrimidine metabolism; UMP biosynthesis via de novo pathway; (S)-dihydroorotate from bicarbonate: step 2/3. Its function is as follows. Catalyzes the condensation of carbamoyl phosphate and aspartate to form carbamoyl aspartate and inorganic phosphate, the committed step in the de novo pyrimidine nucleotide biosynthesis pathway. This chain is Aspartate carbamoyltransferase catalytic subunit, found in Variovorax paradoxus (strain S110).